Here is a 214-residue protein sequence, read N- to C-terminus: Adenylate kinase (214 aa).

10 to 15 (GAGKGT) contacts ATP. The NMP stretch occupies residues 30 to 59 (STGDMLRAAVKAGTPLGLEAKKVMDAGQLV). AMP is bound by residues Thr31, Arg36, 57–59 (QLV), 85–88 (GFPR), and Gln92. The LID stretch occupies residues 122–159 (GRRVHPGSGRVYHVVFNPPKVEGKDDVTGEDLAIRPDD). ATP-binding positions include Arg123 and 132–133 (VY). AMP is bound by residues Arg156 and Arg167. Gln200 contacts ATP.

This sequence belongs to the adenylate kinase family. As to quaternary structure, monomer.

It localises to the cytoplasm. The catalysed reaction is AMP + ATP = 2 ADP. Its pathway is purine metabolism; AMP biosynthesis via salvage pathway; AMP from ADP: step 1/1. Catalyzes the reversible transfer of the terminal phosphate group between ATP and AMP. Plays an important role in cellular energy homeostasis and in adenine nucleotide metabolism. In Shewanella baltica (strain OS155 / ATCC BAA-1091), this protein is Adenylate kinase.